Here is a 454-residue protein sequence, read N- to C-terminus: Transcription factor efuD (454 aa).

One can recognise an HTH TFE/IIEalpha-type domain in the interval 4–111 (AKELIRITAR…NYHRAIDSIK (108 aa)). Residues 327 to 454 (LRTDDDGAMD…DEDELEFEDI (128 aa)) are disordered. Residues 353–372 (DQDEEEEEEDDDDDEFEDVD) are compositionally biased toward acidic residues. Residues 387–401 (SVSTPATSAQVSSTA) show a composition bias toward polar residues. The segment covering 423-437 (APAAAASSQAAAAES) has biased composition (low complexity). Residues 442-454 (SDEDEDELEFEDI) show a composition bias toward acidic residues.

This sequence belongs to the TFIIE alpha subunit family.

It is found in the nucleus. Functionally, transcription factor; part of the gene cluster that mediates the biosynthesis of enfumafungin, a glycosylated fernene-type triterpenoid with potent antifungal activity, mediated by its interaction with beta-1,3-glucan synthase and the fungal cell wall. Is possibly responsible for the transcription regulation of one or more genes within the gene cluster. This is Transcription factor efuD from Hormonema carpetanum.